We begin with the raw amino-acid sequence, 192 residues long: MSKPSDRINLTNQFLIAMPNMADPTFSGTVVYLCDHSERGALGLVINRPTDIDLESLFNRIDLKLDIEPLLHIPVYFGGPVQTERGFVLHEPVEGASYNSSMSVDGGLEMTTSKDVLEAVATGTGPKRFLLTLGHAGWGAGQLEEEIARNGWLTVAADPRIVFDTPAEERFEAALGLLGVSSSMLSGEAGHA.

The protein belongs to the UPF0301 (AlgH) family.

The protein is UPF0301 protein Bcen_0382 of Burkholderia orbicola (strain AU 1054).